Reading from the N-terminus, the 71-residue chain is Large ribosomal subunit protein uL29 (71 aa).

The protein belongs to the universal ribosomal protein uL29 family.

The sequence is that of Large ribosomal subunit protein uL29 from Rickettsia typhi (strain ATCC VR-144 / Wilmington).